We begin with the raw amino-acid sequence, 122 residues long: Large ribosomal subunit protein uL14 (122 aa).

It belongs to the universal ribosomal protein uL14 family. As to quaternary structure, part of the 50S ribosomal subunit. Forms a cluster with proteins L3 and L19. In the 70S ribosome, L14 and L19 interact and together make contacts with the 16S rRNA in bridges B5 and B8.

Its function is as follows. Binds to 23S rRNA. Forms part of two intersubunit bridges in the 70S ribosome. The protein is Large ribosomal subunit protein uL14 of Mycobacterium leprae (strain TN).